The following is a 335-amino-acid chain: Eukaryotic translation initiation factor 3 subunit I (335 aa).

WD repeat units lie at residues 8-47 (GHER…RLGT), 50-91 (GHQG…KTWD), 145-184 (CAES…LLFN), 189-228 (EPDL…VMKT), and 286-325 (GHFG…FDFT).

The protein belongs to the eIF-3 subunit I family. In terms of assembly, component of the eukaryotic translation initiation factor 3 (eIF-3) complex.

It localises to the cytoplasm. Its function is as follows. Component of the eukaryotic translation initiation factor 3 (eIF-3) complex, which is involved in protein synthesis of a specialized repertoire of mRNAs and, together with other initiation factors, stimulates binding of mRNA and methionyl-tRNAi to the 40S ribosome. The eIF-3 complex specifically targets and initiates translation of a subset of mRNAs involved in cell proliferation. This chain is Eukaryotic translation initiation factor 3 subunit I (tif34), found in Botryotinia fuckeliana (strain B05.10) (Noble rot fungus).